Consider the following 346-residue polypeptide: Methylthioribose-1-phosphate isomerase (346 aa).

Substrate-binding positions include 44-46, Arg87, and Gln194; that span reads RGA. The active-site Proton donor is the Asp235. 245–246 is a binding site for substrate; it reads NK.

Belongs to the eIF-2B alpha/beta/delta subunits family. MtnA subfamily.

The catalysed reaction is 5-(methylsulfanyl)-alpha-D-ribose 1-phosphate = 5-(methylsulfanyl)-D-ribulose 1-phosphate. It functions in the pathway amino-acid biosynthesis; L-methionine biosynthesis via salvage pathway; L-methionine from S-methyl-5-thio-alpha-D-ribose 1-phosphate: step 1/6. Catalyzes the interconversion of methylthioribose-1-phosphate (MTR-1-P) into methylthioribulose-1-phosphate (MTRu-1-P). The polypeptide is Methylthioribose-1-phosphate isomerase (Desulforamulus reducens (strain ATCC BAA-1160 / DSM 100696 / MI-1) (Desulfotomaculum reducens)).